The following is a 265-amino-acid chain: ClpXP adapter protein SpxH (265 aa).

The protein belongs to the SpxH family. In terms of assembly, interacts with Spx.

Its subcellular location is the cytoplasm. In terms of biological role, adapter protein required for efficient degradation of Spx by ClpXP under non-stress conditions. Interaction with Spx stabilizes Spx and exposes the C-terminus of Spx for recognition and proteolysis by ClpXP. The polypeptide is ClpXP adapter protein SpxH (Staphylococcus epidermidis (strain ATCC 35984 / DSM 28319 / BCRC 17069 / CCUG 31568 / BM 3577 / RP62A)).